Here is a 271-residue protein sequence, read N- to C-terminus: 2,3,4,5-tetrahydropyridine-2,6-dicarboxylate N-succinyltransferase (271 aa).

Positions 102 and 139 each coordinate substrate.

It belongs to the transferase hexapeptide repeat family. In terms of assembly, homotrimer.

Its subcellular location is the cytoplasm. It catalyses the reaction (S)-2,3,4,5-tetrahydrodipicolinate + succinyl-CoA + H2O = (S)-2-succinylamino-6-oxoheptanedioate + CoA. Its pathway is amino-acid biosynthesis; L-lysine biosynthesis via DAP pathway; LL-2,6-diaminopimelate from (S)-tetrahydrodipicolinate (succinylase route): step 1/3. This is 2,3,4,5-tetrahydropyridine-2,6-dicarboxylate N-succinyltransferase from Coxiella burnetii (strain RSA 331 / Henzerling II).